We begin with the raw amino-acid sequence, 505 residues long: Acetyl-coenzyme A carboxylase carboxyl transferase subunit beta, chloroplastic (505 aa).

Low complexity predominate over residues 189–205; sequence ESVSNSKSGSSSIRTGG. Positions 189-213 are disordered; that stretch reads ESVSNSKSGSSSIRTGGNSSDFNRR. In terms of domain architecture, CoA carboxyltransferase N-terminal spans 228-499; it reads LWVQCENCYG…NQNSSRALGS (272 aa). Zn(2+)-binding residues include cysteine 232, cysteine 235, cysteine 251, and cysteine 254. Residues 232–254 form a C4-type zinc finger; the sequence is CENCYGLNYKKFVSFKMHICEQC.

The protein belongs to the AccD/PCCB family. In terms of assembly, acetyl-CoA carboxylase is a heterohexamer composed of biotin carboxyl carrier protein, biotin carboxylase and 2 subunits each of ACCase subunit alpha and ACCase plastid-coded subunit beta (accD). Zn(2+) serves as cofactor.

It localises to the plastid. It is found in the chloroplast stroma. It catalyses the reaction N(6)-carboxybiotinyl-L-lysyl-[protein] + acetyl-CoA = N(6)-biotinyl-L-lysyl-[protein] + malonyl-CoA. Its pathway is lipid metabolism; malonyl-CoA biosynthesis; malonyl-CoA from acetyl-CoA: step 1/1. In terms of biological role, component of the acetyl coenzyme A carboxylase (ACC) complex. Biotin carboxylase (BC) catalyzes the carboxylation of biotin on its carrier protein (BCCP) and then the CO(2) group is transferred by the transcarboxylase to acetyl-CoA to form malonyl-CoA. In Calycanthus floridus var. glaucus (Eastern sweetshrub), this protein is Acetyl-coenzyme A carboxylase carboxyl transferase subunit beta, chloroplastic.